The following is a 284-amino-acid chain: Undecaprenyl-diphosphatase (284 aa).

8 helical membrane passes run 1 to 21 (MNWL…FLPV), 43 to 63 (ITAF…LYFW), 88 to 108 (YTLG…GLVF), 116 to 136 (LSSL…MWLG), 149 to 169 (IGIV…LFPG), 193 to 213 (LSFF…SVSA), 225 to 245 (VAIG…VAYV), and 259 to 279 (FTGF…LILS).

It belongs to the UppP family.

The protein localises to the cell membrane. The catalysed reaction is di-trans,octa-cis-undecaprenyl diphosphate + H2O = di-trans,octa-cis-undecaprenyl phosphate + phosphate + H(+). Catalyzes the dephosphorylation of undecaprenyl diphosphate (UPP). Confers resistance to bacitracin. In Cutibacterium acnes (strain DSM 16379 / KPA171202) (Propionibacterium acnes), this protein is Undecaprenyl-diphosphatase.